We begin with the raw amino-acid sequence, 205 residues long: Recombination protein RecR (205 aa).

The segment at 59-74 adopts a C4-type zinc-finger fold; the sequence is CARCNTFCEGGLCDIC. In terms of domain architecture, Toprim spans 82-177; that stretch reads RRLMVVHMPA…KVSRLSQGIP (96 aa).

Belongs to the RecR family.

May play a role in DNA repair. It seems to be involved in an RecBC-independent recombinational process of DNA repair. It may act with RecF and RecO. This Neisseria meningitidis serogroup A / serotype 4A (strain DSM 15465 / Z2491) protein is Recombination protein RecR.